The primary structure comprises 213 residues: Ras-related protein Rab-4B (213 aa).

Position 2 is an N-acetylalanine (Ala-2). Residues Gly-18, Thr-19, Gly-20, Lys-21, Ser-22, and Cys-23 each contribute to the GDP site. GTP-binding residues include Gly-18, Thr-19, Gly-20, Lys-21, Ser-22, Cys-23, Ser-37, His-39, and Thr-40. Position 22 (Ser-22) interacts with Mg(2+). A Switch 1 motif is present at residues His-39 to Glu-44. The Mg(2+) site is built by Thr-40 and Asp-63. A Switch 2 motif is present at residues Ala-65 to Thr-74. Position 66 (Gly-66) interacts with GTP. Position 67 is a 5-glutamyl serotonin (Gln-67). Residues Asn-121, Lys-122, Asp-124, Ala-152, and Leu-153 each coordinate GDP. GTP is bound by residues Asn-121, Lys-122, Asp-124, Ala-152, and Leu-153. Ser-185 and Ser-193 each carry phosphoserine. Residues Cys-211 and Cys-213 are each lipidated (S-geranylgeranyl cysteine). Position 213 is a cysteine methyl ester (Cys-213).

The protein belongs to the small GTPase superfamily. Rab family. In terms of assembly, interacts (GTP-bound form) with RUFY1; the interaction allows endosomal tethering and fusion. It depends on Mg(2+) as a cofactor. Post-translationally, serotonylation of Gln-67 by TGM2 during activation and aggregation of platelets leads to constitutive activation of GTPase activity.

The protein resides in the cell membrane. It is found in the early endosome membrane. It carries out the reaction GTP + H2O = GDP + phosphate + H(+). Regulated by guanine nucleotide exchange factors (GEFs) which promote the exchange of bound GDP for free GTP. Regulated by GTPase activating proteins (GAPs) which increase the GTP hydrolysis activity. Inhibited by GDP dissociation inhibitors (GDIs). Functionally, the small GTPases Rab are key regulators of intracellular membrane trafficking, from the formation of transport vesicles to their fusion with membranes. Rabs cycle between an inactive GDP-bound form and an active GTP-bound form that is able to recruit to membranes different set of downstream effectors directly responsible for vesicle formation, movement, tethering and fusion. RAB4B mediates endosomal tethering and fusion through the interaction with RUFY1 and RAB14. Acts as a regulator of platelet alpha-granule release during activation and aggregation of platelets. In Mus musculus (Mouse), this protein is Ras-related protein Rab-4B.